The chain runs to 254 residues: Low affinity immunoglobulin gamma Fc region receptor III-A (254 aa).

Residues 1–16 form the signal peptide; the sequence is MWQLLLPTALLLLVSA. The Extracellular portion of the chain corresponds to 17–208; it reads GMRAEDLPKA…ISSFFPPGYQ (192 aa). Ig-like C2-type domains lie at 24–105 and 107–189; these read PKAV…LEVH and GWLL…VNIT. 2 disulfide bridges follow: C47-C89 and C128-C172. Residues N56, N63, and N82 are each glycosylated (N-linked (GlcNAc...) asparagine). N-linked (GlcNAc...) asparagine glycans are attached at residues N180 and N187. A helical transmembrane segment spans residues 209-229; that stretch reads VSFCLVMVLLFAVDTGLYFSM. Residues 230–254 lie on the Cytoplasmic side of the membrane; that stretch reads KKSIPSSTRDWEDHKFKWSKDPQDK.

In terms of assembly, forms a heterooligomeric complex with ITAM-containing signaling subunits, either a homodimer of CD247, a homodimer of FCER1G or a heterodimer of CD247 and FCER1G. Interacts (via transmembrane domain) with signaling subunits; this interaction is a prerequisite for receptor complex expression on the cell surface and intracellular signal transduction. Binds the Fc region of antigen-complexed IgG with a preference for IgG1 and IgG3 isotypes. Interacts with CD2; this interaction is involved in NK cell activation and cytotoxicity. Interacts with S100A4; this interaction inhibits PKC-dependent phosphorylation of FCGR3A. In terms of processing, glycosylated. Glycosylation plays an inhibitory role in the interaction with IgG1 and IgG2. Post-translationally, undergoes rapid ectodomain shedding upon NK cell stimulation. The soluble form is produced by a proteolytic cleavage mediated by ADAM17. Repeated stimulation causes receptor shedding, a mechanism that allows for increased NK cell motility and detachment from opsonized target cells while avoiding activation-induced NK cell apoptosis. Lymphocytes and monocytes.

It is found in the cell membrane. Its subcellular location is the secreted. Receptor for the invariable Fc fragment of immunoglobulin gamma (IgG). Optimally activated upon binding of clustered antigen-IgG complexes displayed on cell surfaces, triggers lysis of antibody-coated cells, a process known as antibody-dependent cellular cytotoxicity (ADCC). Does not bind free monomeric IgG, thus avoiding inappropriate effector cell activation in the absence of antigenic trigger. Mediates IgG effector functions on natural killer (NK) cells. Binds antigen-IgG complexes generated upon infection and triggers NK cell-dependent cytokine production and degranulation to limit viral load and propagation. Involved in the generation of memory-like adaptive NK cells capable to produce high amounts of IFNG and to efficiently eliminate virus-infected cells via ADCC. Regulates NK cell survival and proliferation, in particular by preventing NK cell progenitor apoptosis. Fc-binding subunit that associates with CD247 and/or FCER1G adapters to form functional signaling complexes. Following the engagement of antigen-IgG complexes, triggers phosphorylation of immunoreceptor tyrosine-based activation motif (ITAM)-containing adapters with subsequent activation of phosphatidylinositol 3-kinase signaling and sustained elevation of intracellular calcium that ultimately drive NK cell activation. The ITAM-dependent signaling coupled to receptor phosphorylation by PKC mediates robust intracellular calcium flux that leads to production of pro-inflammatory cytokines, whereas in the absence of receptor phosphorylation it mainly activates phosphatidylinositol 3-kinase signaling leading to cell degranulation. Costimulates NK cells and trigger lysis of target cells independently of IgG binding. Mediates the antitumor activities of therapeutic antibodies. Upon ligation on monocytes triggers TNFA-dependent ADCC of IgG-coated tumor cells. Mediates enhanced ADCC in response to afucosylated IgGs. This chain is Low affinity immunoglobulin gamma Fc region receptor III-A (FCGR3A), found in Macaca fascicularis (Crab-eating macaque).